The following is a 151-amino-acid chain: Small ribosomal subunit protein uS15 (151 aa).

It belongs to the universal ribosomal protein uS15 family.

The protein is Small ribosomal subunit protein uS15 (RPS13) of Ciona intestinalis (Transparent sea squirt).